A 213-amino-acid chain; its full sequence is Large ribosomal subunit protein uL1 (213 aa).

Belongs to the universal ribosomal protein uL1 family. As to quaternary structure, part of the 50S ribosomal subunit.

Binds directly to 23S rRNA. Probably involved in E site tRNA release. Its function is as follows. Protein L1 is also a translational repressor protein, it controls the translation of its operon by binding to its mRNA. The chain is Large ribosomal subunit protein uL1 from Methanococcus maripaludis (strain C5 / ATCC BAA-1333).